Consider the following 142-residue polypeptide: Small ribosomal subunit protein uS19 (142 aa).

Residue Ser2 is modified to N-acetylserine. Residues Lys24, Lys35, and Lys64 each participate in a glycyl lysine isopeptide (Lys-Gly) (interchain with G-Cter in ubiquitin) cross-link.

This sequence belongs to the universal ribosomal protein uS19 family. As to quaternary structure, component of the small ribosomal subunit (SSU). Mature yeast ribosomes consist of a small (40S) and a large (60S) subunit. The 40S small subunit contains 1 molecule of ribosomal RNA (18S rRNA) and 33 different proteins (encoded by 57 genes). The large 60S subunit contains 3 rRNA molecules (25S, 5.8S and 5S rRNA) and 46 different proteins (encoded by 81 genes).

It is found in the cytoplasm. In terms of biological role, component of the ribosome, a large ribonucleoprotein complex responsible for the synthesis of proteins in the cell. The small ribosomal subunit (SSU) binds messenger RNAs (mRNAs) and translates the encoded message by selecting cognate aminoacyl-transfer RNA (tRNA) molecules. The large subunit (LSU) contains the ribosomal catalytic site termed the peptidyl transferase center (PTC), which catalyzes the formation of peptide bonds, thereby polymerizing the amino acids delivered by tRNAs into a polypeptide chain. The nascent polypeptides leave the ribosome through a tunnel in the LSU and interact with protein factors that function in enzymatic processing, targeting, and the membrane insertion of nascent chains at the exit of the ribosomal tunnel. uS19 is involved in the nuclear export of the small ribosomal subunit precursor. Has a role in the late stage of the assembly of pre-40S particles within the nucleus and controls their export to the cytoplasm. This chain is Small ribosomal subunit protein uS19, found in Saccharomyces cerevisiae (strain ATCC 204508 / S288c) (Baker's yeast).